The sequence spans 472 residues: MKDTIVLYPNIGRGHLVSMVELGKLILTHHPSLSITILILTPSTTPSTTTFACDSNAQYIATVTATIPAITFHHVPLATLPSNTPSLPPHLVSLELARHSTQNVAVAFQTLAKASNLKAIIIDLLNFNDPKTLTQNLNKNIHTYFYYTSGASTLALLLHYPTIHETLTKNYVKDQPLQIQIPGLRANITTDDFAKDSKDPSNYSSQAFLKIAETMRGSFGIIINTFEAIEEELIRALSEDGTVPPLFCIGPVISAPYGEDDKGCLSWLDSQPSQSVVLLCFGSMGSFSRTQLKEIAVGLEKSEQRFLWVVRAELDCADSVDEQPSLDELMPGGFLERTKEKGLVVRDWAPQVQILSHDSVGGFVTHCGWNSVLEAVCEGVPMAAWPLYAEQRVNRVIMVEDMKVALAVNEDKAGFVSATELGDRVRELMESDKGKEIRQRTFKMKISAAEAMAEGGTSRVALDKLAKLWKES.

Residues Ser283, 348–349 (WA), 366–374 (HCGWNSVLE), and 388–391 (YAEQ) contribute to the UDP-alpha-D-glucose site.

Belongs to the UDP-glycosyltransferase family. As to expression, highly expressed in roots. Expressed in leaves and stems.

In terms of biological role, glycosyltransferase that possesses isoflavonoids 4'-O- and 7-O-glucosyltransferase activities. Shows a successive glucosylation toward the acceptors producing their corresponding 4',7-O-diglucosides. Can use genistein, formononetin, daidzein, liquiritigenin and naringenin as substrates. Also shows a 3'-O-glucosylation activity in vitro. In Pueraria montana var. lobata (Kudzu vine), this protein is UDP-glycosyltransferase 2.